A 240-amino-acid chain; its full sequence is 1-(5-phosphoribosyl)-5-[(5-phosphoribosylamino)methylideneamino] imidazole-4-carboxamide isomerase (240 aa).

Asp-8 functions as the Proton acceptor in the catalytic mechanism. The active-site Proton donor is Asp-129.

Belongs to the HisA/HisF family.

The protein resides in the cytoplasm. The catalysed reaction is 1-(5-phospho-beta-D-ribosyl)-5-[(5-phospho-beta-D-ribosylamino)methylideneamino]imidazole-4-carboxamide = 5-[(5-phospho-1-deoxy-D-ribulos-1-ylimino)methylamino]-1-(5-phospho-beta-D-ribosyl)imidazole-4-carboxamide. Its pathway is amino-acid biosynthesis; L-histidine biosynthesis; L-histidine from 5-phospho-alpha-D-ribose 1-diphosphate: step 4/9. The chain is 1-(5-phosphoribosyl)-5-[(5-phosphoribosylamino)methylideneamino] imidazole-4-carboxamide isomerase from Listeria monocytogenes serotype 4b (strain CLIP80459).